Reading from the N-terminus, the 930-residue chain is MKPPRPVRTCSKVLVLLSLLAIHQTTTAEKNGIDIYSLTVDSRVSSRFAHTVVTSRVVNRANTVQEATFQMELPKKAFITNFSMIIDGMTYPGIIKEKAEAQAQYSAAVAKGKSAGLVKATGRNMEQFQVSVSVAPNAKITFELVYEELLKRRLGVYELLLKVRPQQLVKHLQMDIHIFEPQGISFLETESTFMTNQLVDALTTWQNKTKAHIRFKPTLSQQQKSPEQQETVLDGNLIIRYDVDRAISGGSIQIENGYFVHYFAPEGLTTMPKNVVFVIDKSGSMSGRKIQQTREALIKILDDLSPRDQFNLIVFSTEATQWRPSLVPASAENVNKARSFAAGIQALGGTNINDAMLMAVQLLDSSNQEERLPEGSVSLIILLTDGDPTVGETNPRSIQNNVREAVSGRYSLFCLGFGFDVSYAFLEKLALDNGGLARRIHEDSDSALQLQDFYQEVANPLLTAVTFEYPSNAVEEVTQNNFRLLFKGSEMVVAGKLQDRGPDVLTATVSGKLPTQNITFQTESSVAEQEAEFQSPKYIFHNFMERLWAYLTIQQLLEQTVSASDADQQALRNQALNLSLAYSFVTPLTSMVVTKPDDQEQSQVAEKPMEGESRNRNVHSGSTFFKYYLQGAKIPKPEASFSPRRGWNRQAGAAGSRMNFRPGVLSSRQLGLPGPPDVPDHAAYHPFRRLAILPASAPPATSNPDPAVSRVMNMKIEETTMTTQTPAPIQAPSAILPLPGQSVERLCVDPRHRQGPVNLLSDPEQGVEVTGQYEREKAGFSWIEVTFKNPLVWVHASPEHVVVTRNRRSSAYKWKETLFSVMPGLKMTMDKTGLLLLSDPDKVTIGLLFWDGRGEGLRLLLRDTDRFSSHVGGTLGQFYQEVLWGSPAASDDGRRTLRVQGNDHSATRERRLDYQEGPPGVEISCWSVEL.

An N-terminal signal peptide occupies residues 1–28 (MKPPRPVRTCSKVLVLLSLLAIHQTTTA). Residues 29–148 (EKNGIDIYSL…KITFELVYEE (120 aa)) form the VIT domain. N-linked (GlcNAc...) asparagine glycosylation is found at asparagine 81 and asparagine 207. The 161-residue stretch at 272-432 (PKNVVFVIDK…YAFLEKLALD (161 aa)) folds into the VWFA domain. N-linked (GlcNAc...) asparagine; atypical glycosylation occurs at asparagine 274. 2 N-linked (GlcNAc...) asparagine glycosylation sites follow: asparagine 517 and asparagine 577. The tract at residues 595–618 (KPDDQEQSQVAEKPMEGESRNRNV) is disordered. Residues 658 to 688 (MNFRPGVLSSRQLGLPGPPDVPDHAAYHPFR) are proline-rich (PRR) potential bioactive peptide. Positions 662–688 (PGVLSSRQLGLPGPPDVPDHAAYHPFR) are cleaved as a propeptide — potentially active peptide. O-linked (GalNAc...) threonine glycans are attached at residues threonine 719, threonine 720, and threonine 722. Positions 719 to 725 (TTMTTQT) are O-glycosylated at three sites. The cysteines at positions 747 and 925 are disulfide-linked.

It belongs to the ITIH family. Interacts (via C-terminus) with DNAJC1 (via SANT 2 domain); this interaction protects ITIH4 against cleavage by kallikrein in vitro. In terms of processing, cleaved by plasma kallikrein to yield 100 kDa and 35 kDa fragments, and the resulting 100 kDa fragment is further converted to a 70 kDa fragment. N- and O-glycosylated. In urine, O-linked glycosylation on threonine residues in the region from Thr-719 to Thr-725 consists of core 1 or possibly core 8 glycans. Mainly Hex(HexNAc)(2), but also some Hex(3)(HexNAc)(3). N-glycosylated but not O-glycosylated in plasma. As to expression, liver specific.

It is found in the secreted. Type II acute-phase protein (APP) involved in inflammatory responses to trauma. May also play a role in liver development or regeneration. The chain is Inter-alpha-trypsin inhibitor heavy chain H4 (ITIH4) from Homo sapiens (Human).